The chain runs to 403 residues: Acetylornithine aminotransferase (403 aa).

Pyridoxal 5'-phosphate is bound by residues 101–102 (GA) and Phe-134. Arg-137 is a binding site for N(2)-acetyl-L-ornithine. 219 to 222 (DEVQ) is a pyridoxal 5'-phosphate binding site. An N6-(pyridoxal phosphate)lysine modification is found at Lys-248. Residue Thr-276 coordinates N(2)-acetyl-L-ornithine. Thr-277 contacts pyridoxal 5'-phosphate.

The protein belongs to the class-III pyridoxal-phosphate-dependent aminotransferase family. ArgD subfamily. Homodimer. The cofactor is pyridoxal 5'-phosphate.

The protein localises to the cytoplasm. The catalysed reaction is N(2)-acetyl-L-ornithine + 2-oxoglutarate = N-acetyl-L-glutamate 5-semialdehyde + L-glutamate. It functions in the pathway amino-acid biosynthesis; L-arginine biosynthesis; N(2)-acetyl-L-ornithine from L-glutamate: step 4/4. The polypeptide is Acetylornithine aminotransferase (Brucella melitensis biotype 1 (strain ATCC 23456 / CCUG 17765 / NCTC 10094 / 16M)).